We begin with the raw amino-acid sequence, 493 residues long: Probable polyol transporter 6 (493 aa).

The next 12 membrane-spanning stretches (helical) occupy residues 25 to 45 (SIVSIIFGYDTGVMSGAMVFI), 54 to 74 (VQIEVLTGILNLCALVGSLLA), 85 to 105 (YTIVLASILFMLGSILMGWGP), 116 to 136 (TAGLGVGFALMVAPVYSAEIA), 142 to 162 (GLLASLPHLCISIGILLGYIV), 177 to 197 (LMLGIAAVPSLVLAFGILKMP), 275 to 295 (VLLTALGIHFFQHASGIEAVL), 313 to 333 (LFLVTIGVGIMKTTFIFTATL), 343 to 363 (LLLTSVGGMVIALTMLGFGLT), 372 to 392 (LAWALVLSIVAAYSFVAFFSI), 414 to 434 (GASLGVAVNRVMNATVSMSFL), and 444 to 464 (GAFFMFAGVAAVAWNFFFFLL).

It belongs to the major facilitator superfamily. Sugar transporter (TC 2.A.1.1) family.

It is found in the membrane. In terms of biological role, plasma membrane sugar-proton symporter. This Arabidopsis thaliana (Mouse-ear cress) protein is Probable polyol transporter 6 (PLT6).